A 311-amino-acid chain; its full sequence is tRNA dimethylallyltransferase (311 aa).

Gly-9–Thr-16 is a binding site for ATP. Substrate is bound at residue Thr-11 to Thr-16. Residues Asp-34–Gln-37 form an interaction with substrate tRNA region.

The protein belongs to the IPP transferase family. Monomer. Requires Mg(2+) as cofactor.

It carries out the reaction adenosine(37) in tRNA + dimethylallyl diphosphate = N(6)-dimethylallyladenosine(37) in tRNA + diphosphate. Its function is as follows. Catalyzes the transfer of a dimethylallyl group onto the adenine at position 37 in tRNAs that read codons beginning with uridine, leading to the formation of N6-(dimethylallyl)adenosine (i(6)A). This chain is tRNA dimethylallyltransferase, found in Clostridium botulinum (strain Langeland / NCTC 10281 / Type F).